A 298-amino-acid polypeptide reads, in one-letter code: MDVSNENANSSIMTMEANFFMCIIVVFTQVRPVNNPESSAYLFSGFCRHTHKNACFFSFDFFQLVFDASSFAIPATLFYKYTKVTNINMKNITKNQIRMILLSSYLLSLIVGVIYVITYEPDESLEVASETRKFHSTQYDFRYYADITGYQKHFWSWLATNLNMISIFVPPIMSIVFIRLIQIKLNSLKHLFTDKTAAQAKKFDLALTIQTLVPAVCVIPIYIAHLILENYDLPFLSNFEKVLYMMLSLPTAIDAFIVIVTITPYQKAFIAFFKDTFCGKKVSPAIVRRNNISAVSIF.

A run of 6 helical transmembrane segments spans residues 10–30 (SSIM…FTQV), 54–74 (ACFF…FAIP), 99–119 (MILL…VITY), 158–178 (LATN…IVFI), 207–227 (LTIQ…AHLI), and 242–262 (VLYM…IVTI).

It belongs to the nematode receptor-like protein srd family.

Its subcellular location is the membrane. The sequence is that of Serpentine receptor class delta-34 (srd-34) from Caenorhabditis elegans.